The primary structure comprises 258 residues: Imidazole glycerol phosphate synthase subunit HisF (258 aa).

Catalysis depends on residues D11 and D130.

The protein belongs to the HisA/HisF family. As to quaternary structure, heterodimer of HisH and HisF.

It is found in the cytoplasm. The catalysed reaction is 5-[(5-phospho-1-deoxy-D-ribulos-1-ylimino)methylamino]-1-(5-phospho-beta-D-ribosyl)imidazole-4-carboxamide + L-glutamine = D-erythro-1-(imidazol-4-yl)glycerol 3-phosphate + 5-amino-1-(5-phospho-beta-D-ribosyl)imidazole-4-carboxamide + L-glutamate + H(+). Its pathway is amino-acid biosynthesis; L-histidine biosynthesis; L-histidine from 5-phospho-alpha-D-ribose 1-diphosphate: step 5/9. Its function is as follows. IGPS catalyzes the conversion of PRFAR and glutamine to IGP, AICAR and glutamate. The HisF subunit catalyzes the cyclization activity that produces IGP and AICAR from PRFAR using the ammonia provided by the HisH subunit. This Salmonella agona (strain SL483) protein is Imidazole glycerol phosphate synthase subunit HisF.